Reading from the N-terminus, the 190-residue chain is Threonylcarbamoyl-AMP synthase (190 aa).

Positions 7–190 constitute a YrdC-like domain; it reads TGSIAAAVDL…ALTGELFRQG (184 aa).

This sequence belongs to the SUA5 family. TsaC subfamily.

Its subcellular location is the cytoplasm. It carries out the reaction L-threonine + hydrogencarbonate + ATP = L-threonylcarbamoyladenylate + diphosphate + H2O. Required for the formation of a threonylcarbamoyl group on adenosine at position 37 (t(6)A37) in tRNAs that read codons beginning with adenine. Catalyzes the conversion of L-threonine, HCO(3)(-)/CO(2) and ATP to give threonylcarbamoyl-AMP (TC-AMP) as the acyladenylate intermediate, with the release of diphosphate. This Salmonella choleraesuis (strain SC-B67) protein is Threonylcarbamoyl-AMP synthase.